We begin with the raw amino-acid sequence, 304 residues long: Non-structural maintenance of chromosomes element 3 homolog (304 aa).

Disordered regions lie at residues 1–82 (MLQK…PRSQ) and 285–304 (ALADEENRARPQPSGPAPSS). Residues 32–43 (AGEDARVLRDGF) show a composition bias toward basic and acidic residues. A phosphoserine mark is found at Ser-57, Ser-60, and Ser-64. The span at 60–80 (SQGPSPQGARRAQAAPAVGPR) shows a compositional bias: low complexity. Positions 78–304 (GPRSQKQLEL…PQPSGPAPSS (227 aa)) are interaction with NSMCE1. Positions 85–285 (LELKVSELVQ…KDWPAQYCEA (201 aa)) constitute an MAGE domain.

Component of the SMC5-SMC6 complex which consists at least of SMC5, SMC6, NSMCE2, NSMCE1, NSMCE4A or EID3 and NSMCE3. NSMCE1, NSMCE4A or EID3 and NSMCE3 probably form a subcomplex that bridges the head domains of the SMC5:SMC6 heterodimer. Interacts with PJA1. Interacts with E2F1 (via C-terminus). Interacts with NGFR (via C-terminus). Interacts with NSMCE1. Interacts with NSMCE4. Interacts with SMC6. Interacts with EID3. As to expression, ubiquitous.

The protein localises to the cytoplasm. Its subcellular location is the nucleus. It is found in the chromosome. The protein resides in the telomere. Its function is as follows. Component of the SMC5-SMC6 complex, a complex involved in repair of DNA double-strand breaks by homologous recombination. The complex may promote sister chromatid homologous recombination by recruiting the SMC1-SMC3 cohesin complex to double-strand breaks. The complex is required for telomere maintenance via recombination in ALT (alternative lengthening of telomeres) cell lines and mediates sumoylation of shelterin complex (telosome) components which is proposed to lead to shelterin complex disassembly in ALT-associated PML bodies (APBs). In vitro enhances ubiquitin ligase activity of NSMCE1. Proposed to act through recruitment and/or stabilization of the Ubl-conjugating enzyme (E2) at the E3:substrate complex. May be a growth suppressor that facilitates the entry of the cell into cell cycle arrest. This chain is Non-structural maintenance of chromosomes element 3 homolog, found in Homo sapiens (Human).